The sequence spans 433 residues: MSISLKISHISSFSNDGFNSVKQCRVSQRFEIRSVCFRRSPGVESRRIHLNSDLSSRNLRNRCVGSDVVTGEISGRSIPDWAYSGVKDETLSDLEPELDDGDGGDENGNNDGGGNGGNGDGGGGGGDGEGDDGEDEADKAEEKEFGPILKFEEVMKETERRGITLPEDMLEAAKSVGIRKLFLLRYLDLQGSVWPLGFLMRSCAMLRNRMLADPSFLFKVGTEVAIDSCCATFAEVQKRGEDFWSEFELYAADLLVGLVVDVALVGLLAPYARIGKPSVASTGLFKDLKRACASLPSSVFEAERPGCKFSVNQRIATFFYKGLLYGSVGFGCGLIGQGIANLIMTAKRSVKKSEEDVPIPPLFESAALWGVFLGLSSNARYQIINGLERVVEGSTAAKRIPVVAMAFTVGVRFANNVYGGMQFVDWAKLSGVQ.

A chloroplast-targeting transit peptide spans 1 to 63 (MSISLKISHI…LSSRNLRNRC (63 aa)). An N-acetylvaline modification is found at valine 64. Positions 93–105 (DLEPELDDGDGGD) are enriched in acidic residues. A disordered region spans residues 93–143 (DLEPELDDGDGGDENGNNDGGGNGGNGDGGGGGGDGEGDDGEDEADKAEEK). The segment covering 110-127 (NDGGGNGGNGDGGGGGGD) has biased composition (gly residues). Over residues 128 to 139 (GEGDDGEDEADK) the composition is skewed to acidic residues. A run of 2 helical transmembrane segments spans residues 249 to 269 (LYAA…GLLA) and 323 to 343 (LLYG…ANLI).

This sequence belongs to the RETICULATA family. Expressed in root vasculature, distal region of young leaf primordia, leaf bundle sheath cells, hydathodes and pollen grains.

Its subcellular location is the plastid. It is found in the chloroplast membrane. May play a role in leaf development. The chain is Protein RETICULATA-RELATED 1, chloroplastic from Arabidopsis thaliana (Mouse-ear cress).